Consider the following 260-residue polypeptide: Transmembrane protein 106C (260 aa).

Residue Gly2 is the site of N-myristoyl glycine attachment. The helical transmembrane segment at 85–105 (YVLLSVLLCLLASGLVFFFLF) threads the bilayer. N-linked (GlcNAc...) asparagine glycosylation is present at Asn171. The helical transmembrane segment at 196–216 (SYVYFYCTLPAILVHNIVIFM) threads the bilayer.

Belongs to the TMEM106 family. Interacts with TMEM106B.

It is found in the endoplasmic reticulum membrane. Its subcellular location is the membrane. This is Transmembrane protein 106C (Tmem106c) from Rattus norvegicus (Rat).